Consider the following 272-residue polypeptide: HMP-PP phosphatase (272 aa).

The active-site Nucleophile is aspartate 8. Residues aspartate 8, aspartate 10, and aspartate 212 each coordinate Mg(2+).

Belongs to the HAD-like hydrolase superfamily. Cof family. Requires Mg(2+) as cofactor.

It catalyses the reaction 4-amino-2-methyl-5-(diphosphooxymethyl)pyrimidine + H2O = 4-amino-2-methyl-5-(phosphooxymethyl)pyrimidine + phosphate + H(+). Catalyzes the hydrolysis of 4-amino-2-methyl-5-hydroxymethylpyrimidine pyrophosphate (HMP-PP) to 4-amino-2-methyl-5-hydroxymethylpyrimidine phosphate (HMP-P). In Salmonella typhi, this protein is HMP-PP phosphatase.